A 1230-amino-acid polypeptide reads, in one-letter code: Potassium channel subfamily T member 1 (1230 aa).

A disordered region spans residues M1–L37. Residues M1–S93 lie on the Cytoplasmic side of the membrane. A helical transmembrane segment spans residues L94–C126. The Extracellular portion of the chain corresponds to W127 to R153. N-linked (GlcNAc...) asparagine glycosylation is found at N133 and N137. The chain crosses the membrane as a helical span at residues K154–L178. Over S179–S192 the chain is Cytoplasmic. A helical transmembrane segment spans residues F193 to F208. Residues W209–L215 lie on the Extracellular side of the membrane. The chain crosses the membrane as a helical span at residues F216–M233. Residues I234 to S246 lie on the Cytoplasmic side of the membrane. A helical transmembrane segment spans residues A247–E274. At R275–S281 the chain is on the extracellular side. An intramembrane region (pore-forming) is located at residues L282–T302. K(+)-binding residues include V296 and G297. Topologically, residues P303 to K304 are extracellular. Residues I305–Q338 form a helical membrane-spanning segment. At K339–L1230 the chain is on the cytoplasmic side. Residues E352–V488 form the RCK N-terminal 1 domain. Positions 513, 516, 538, and 540 each coordinate Na(+). The disordered stretch occupies residues T660–P689. The Zn(2+) site is built by C758 and C759. 2 residues coordinate K(+): R761 and K764. Na(+) contacts are provided by R761 and K764. Zn(2+)-binding residues include C766 and H768. 4 residues coordinate K(+): N769, Y771, Y777, and G778. Y771 is a binding site for Na(+). F779 is a binding site for Na(+). Residues N781–L921 form the RCK N-terminal 2 domain. K(+) contacts are provided by S787, L818, D820, G842, and D865. 2 disordered regions span residues E1048 to L1078 and S1204 to L1230. Residues A1057–D1072 show a composition bias toward gly residues. Over residues S1204–S1219 the composition is skewed to low complexity.

Belongs to the potassium channel family. Calcium-activated (TC 1.A.1.3) subfamily. KCa4.1/KCNT1 sub-subfamily. As to quaternary structure, homotetramer; which constitutes the Na(+)-activated K(+) channel. Interacts with KCNT2; these heterodimer channels differ from the homomers in their unitary conductance, kinetic behavior, subcellular localization, and response to activation of protein kinase C. Interacts (via C-terminus) with FMR1; this interaction alters gating properties of KCNT1. Interacts with CRBN via its cytoplasmic C-terminus. In terms of processing, phosphorylated by protein kinase C. Phosphorylation of the C-terminal domain increases channel activity. Highest expression in liver, brain and spinal cord. Lowest expression in skeletal muscle.

Its subcellular location is the cell membrane. It carries out the reaction K(+)(in) = K(+)(out). Its activity is regulated as follows. Activated by high intracellular Na(+). In addition to activation by Na(+), is cooperatively activated by intracellular Cl(-) levels. Inhibited by Zn(2+). Activated upon stimulation of G-protein coupled receptors, such as CHRM1 and GRIA1. Sodium-activated K(+) channel. Acts as an important mediator of neuronal membrane excitability. Contributes to the delayed outward currents. Regulates neuronal bursting in sensory neurons. Contributes to synaptic development and plasticity. The protein is Potassium channel subfamily T member 1 of Homo sapiens (Human).